A 178-amino-acid chain; its full sequence is Large ribosomal subunit protein uL6 (178 aa).

It belongs to the universal ribosomal protein uL6 family. In terms of assembly, part of the 50S ribosomal subunit.

This protein binds to the 23S rRNA, and is important in its secondary structure. It is located near the subunit interface in the base of the L7/L12 stalk, and near the tRNA binding site of the peptidyltransferase center. This Frankia alni (strain DSM 45986 / CECT 9034 / ACN14a) protein is Large ribosomal subunit protein uL6.